The chain runs to 2073 residues: MAEVRKFTKRLSKPGTAAELRQSVSEAVRGSVVLEKAKVVEPLDYENVIAQRKTQIYSDPLRDLLMFPMEDISISVIGRQRRTVQSTVPEDAEKRAQSLFVKECIKTYSTDWHVVNYKYEDFSGDFRMLPCKSLRPEKIPNHVFEIDEDCEKDEDSSSLCSQKGGVIKQGWLHKANVNSTITVTMKVFKRRYFYLTQLPDGSYILNSYKDEKNSKESKGCIYLDACIDVVQCPKMRRHAFELKMLDKYSHYLAAETEQEMEEWLITLKKIIQINTDSLVQEKKETVETAQDDETSSQGKAENIMASLERSMHPELMKYGRETEQLNKLSRGDGRQNLFSFDSEVQRLDFSGIEPDIKPFEEKCNKRFLVNCHDLTFNILGQIGDNAKGPPTNVEPFFINLALFDVKNNCKISADFHVDLNPPSVREMLWGSSTQLASDGSPKGSSPESYIHGIAESQLRYIQQGIFSVTNPHPEIFLVARIEKVLQGNITHCAEPYIKNSDPVKTAQKVHRTAKQVCSRLGQYRMPFAWAARPIFKDTQGSLDLDGRFSPLYKQDSSKLSSEDILKLLSEYKKPEKTKLQIIPGQLNITVECVPVDLSNCITSSYVPLKPFEKNCQNITVEVEEFVPEMTKYCYPFTIYKNHLYVYPLQLKYDSQKTFAKARNIAVCVEFRDSDESDASALKCIYGKPAGSVFTTNAYAVVSHHNQNPEFYDEIKIELPIHLHQKHHLLFTFYHVSCEINTKGTTKKQDTVETPVGFAWVPLLKDGRIITFEQQLPVSANLPPGYLNLNDAESRRQCNVDIKWVDGAKPLLKIKSHLESTIYTQDLHVHKFFHHCQLIQSGSKEVPGELIKYLKCLHAMEIQVMIQFLPVILMQLFRVLTNMTHEDDVPINCTMVLLHIVSKCHEEGLDSYLRSFIKYSFRPEKPSAPQAQLIHETLATTMIAILKQSADFLSINKLLKYSWFFFEIIAKSMATYLLEENKIKLPRGQRFPETYHHVLHSLLLAIIPHVTIRYAEIPDESRNVNYSLASFLKRCLTLMDRGFIFNLINDYISGFSPKDPKVLAEYKFEFLQTICNHEHYIPLNLPMAFAKPKLQRVQDSNLEYSLSDEYCKHHFLVGLLLRETSIALQDNYEIRYTAISVIKNLLIKHAFDTRYQHKNQQAKIAQLYLPFVGLLLENIQRLAGRDTLYSCAAMPNSASRDEFPCGFTSPANRGSLSTDKDTAYGSFQNGHGIKREDSRGSLIPEGATGFPDQGNTGENTRQSSTRSSVSQYNRLDQYEIRSLLMCYLYIVKMISEDTLLTYWNKVSPQELINILILLEVCLFHFRYMGKRNIARVHDAWLSKHFGIDRKSQTMPALRNRSGVMQARLQHLSSLESSFTLNHSSTTTEADIFHQALLEGNTATEVSLTVLDTISFFTQCFKTQLLNNDGHNPLMKKVFDIHLAFLKNGQSEVSLKHVFASLRAFISKFPSAFFKGRVNMCAAFCYEVLKCCTSKISSTRNEASALLYLLMRNNFEYTKRKTFLRTHLQIIIAVSQLIADVALSGGSRFQESLFIINNFANSDRPMKATAFPAEVKDLTKRIRTVLMATAQMKEHEKDPEMLIDLQYSLAKSYASTPELRKTWLDSMAKIHVKNGDFSEAAMCYVHVAALVAEFLHRKKLFPNGCSAFKKITPNIDEEGAMKEDAGMMDVHYSEEVLLELLEQCVDGLWKAERYEIISEISKLIVPIYEKRREFEKLTQVYRTLHGAYTKILEVMHTKKRLLGTFFRVAFYGQSFFEEEDGKEYIYKEPKLTGLSEISLRLVKLYGEKFGTENVKIIQDSDKVNAKELDPKYAHIQVTYVKPYFDDKELTERKTEFERNHNISRFVFEAPYTLSGKKQGCIEEQCKRRTILTTSNSFPYVKKRIPINCEQQINLKPIDVATDEIKDKTAELQKLCSSTDVDMIQLQLKLQGCVSVQVNAGPLAYARAFLNDSQASKYPPKKVSELKDMFRKFIQACSIALELNERLIKEDQVEYHEGLKSNFRDMVKELSDIIHEQILQEDTMHSPWMSNTLHVFCAISGTSSDRGYGSPRYAEV.

S12 carries the post-translational modification Phosphoserine. T16 carries the post-translational modification Phosphothreonine. 2 positions are modified to phosphoserine: S23 and S161. The PH domain maps to G165–Q272. Residue Y248 is modified to Phosphotyrosine. A phosphoserine mark is found at S306, S440, and S445. In terms of domain architecture, C2 DOCK-type spans K640–E818. The interval F1226–S1267 is disordered. S1237 and S1240 each carry phosphoserine. In terms of domain architecture, DOCKER spans K1609–L2036.

It belongs to the DOCK family. As to quaternary structure, interacts with CDC42.

Functionally, guanine nucleotide-exchange factor (GEF) that activates CDC42 by exchanging bound GDP for free GTP. Required for marginal zone (MZ) B-cell development, is associated with early bone marrow B-cell development, MZ B-cell formation, MZ B-cell number and marginal metallophilic macrophages morphology. Facilitates filopodia formation through the activation of CDC42. This chain is Dedicator of cytokinesis protein 11, found in Homo sapiens (Human).